We begin with the raw amino-acid sequence, 391 residues long: Elongation factor Tu 1 (391 aa).

The region spanning 10-201 (KLHVNIGTIG…EVDRYIPTPE (192 aa)) is the tr-type G domain. Residues 19–26 (GHVDHGKT) are G1. 19–26 (GHVDHGKT) is a binding site for GTP. Mg(2+) is bound at residue Thr-26. The interval 55–59 (GITIS) is G2. Residues 76 to 79 (DCPG) are G3. Residues 76 to 80 (DCPGH) and 131 to 134 (NKVD) contribute to the GTP site. Residues 131-134 (NKVD) are G4. Positions 169-171 (SAL) are G5.

It belongs to the TRAFAC class translation factor GTPase superfamily. Classic translation factor GTPase family. EF-Tu/EF-1A subfamily. In terms of assembly, monomer.

The protein resides in the cytoplasm. The catalysed reaction is GTP + H2O = GDP + phosphate + H(+). Functionally, GTP hydrolase that promotes the GTP-dependent binding of aminoacyl-tRNA to the A-site of ribosomes during protein biosynthesis. This is Elongation factor Tu 1 from Bartonella bacilliformis (strain ATCC 35685 / KC583 / Herrer 020/F12,63).